The sequence spans 181 residues: MEARRHVALKESVRSIPDYPKPGIIFRDITTLLSDPRAFRRAVDALVHPYAGGQIHQVAGIEARGFILGGAIAHQLSCGFVPIRKKGKLPHKTVSMAYALEYGTDEIEIHVDAVRPGDKVLLVDDLIATGGTAIAAVNLLQKIGAEIVAACFVIDLPEIGGAQRLRDLGVEVRTLMQFEGH.

Belongs to the purine/pyrimidine phosphoribosyltransferase family. Homodimer.

Its subcellular location is the cytoplasm. It catalyses the reaction AMP + diphosphate = 5-phospho-alpha-D-ribose 1-diphosphate + adenine. It participates in purine metabolism; AMP biosynthesis via salvage pathway; AMP from adenine: step 1/1. Its function is as follows. Catalyzes a salvage reaction resulting in the formation of AMP, that is energically less costly than de novo synthesis. The chain is Adenine phosphoribosyltransferase from Methylobacterium radiotolerans (strain ATCC 27329 / DSM 1819 / JCM 2831 / NBRC 15690 / NCIMB 10815 / 0-1).